A 1035-amino-acid polypeptide reads, in one-letter code: Unconventional myosin IC (1035 aa).

Residues G21–Q703 form the Myosin motor domain. G114–T121 contacts ATP. Phosphoserine is present on S304. T310 carries the post-translational modification Phosphothreonine. The segment at L578–D600 is actin-binding. 3 consecutive IQ domains span residues F696 to K728, L729 to K751, and R752 to E779. Residues K857–Q1035 enclose the TH1 domain.

Belongs to the TRAFAC class myosin-kinesin ATPase superfamily. Myosin family. In terms of assembly, binds F-actin. In terms of tissue distribution, in the embryo, expressed in gastric caeca, midgut cells of the proventriculus, and in the mid and hindgut. In the larval and adult gut brush border, expressed in the microvilli. Also expressed at high levels in follicle cells during oogenesis.

The protein resides in the cytoplasm. It is found in the cell cortex. Its subcellular location is the cell membrane. Unconventional myosin that functions as actin-based motor protein with ATPase activity. Binds to membranes enriched in phosphatidylinositol 4-5-bisphosphate, and can glide along actin filaments when anchored to a lipid bilayer. Functions as antagonist for Myo31DF, an unconventional myosin with an essential role in the establishment of body left-right asymmetry. This Drosophila melanogaster (Fruit fly) protein is Unconventional myosin IC (Myo61F).